We begin with the raw amino-acid sequence, 130 residues long: Fluoride-specific ion channel FluC (130 aa).

A run of 4 helical transmembrane segments spans residues 2 to 22 (GLLL…RFAL), 35 to 55 (IGIL…AAFL), 72 to 92 (LFVT…LDIL), and 107 to 127 (ILVS…FIMG). Residues Gly79 and Thr82 each contribute to the Na(+) site.

Belongs to the fluoride channel Fluc/FEX (TC 1.A.43) family.

The protein resides in the cell inner membrane. It carries out the reaction fluoride(in) = fluoride(out). Na(+) is not transported, but it plays an essential structural role and its presence is essential for fluoride channel function. Its function is as follows. Fluoride-specific ion channel. Important for reducing fluoride concentration in the cell, thus reducing its toxicity. This is Fluoride-specific ion channel FluC from Francisella philomiragia subsp. philomiragia (strain ATCC 25017 / CCUG 19701 / FSC 153 / O#319-036).